A 104-amino-acid polypeptide reads, in one-letter code: Evasin P1174 (104 aa).

A signal peptide spans 1–27; sequence LKTFCLFLQIAVFIALGIQIFLCGTDA. 3 cysteine pairs are disulfide-bonded: C40–C59, C44–C61, and C55–C72. N-linked (GlcNAc...) asparagine glycosylation is found at N43, N49, and N58. Positions 85–104 are disordered; sequence KPTSEEIADASPRPKETNSH.

The protein localises to the secreted. Its function is as follows. Salivary chemokine-binding protein which binds to host chemokines CXCL1 and CXCL8. The chain is Evasin P1174 from Ixodes ricinus (Common tick).